Consider the following 540-residue polypeptide: RNA exonuclease 3 (540 aa).

A C3H1-type zinc finger spans residues 7 to 34; sequence QFKHIVCPFLRTGRKCQSRNCFFSHDFQ. An Exonuclease domain is found at 382–529; that stretch reads HCALDCELCY…EDAVSALQLV (148 aa).

Belongs to the REXO1/REXO3 family.

The protein localises to the cytoplasm. It is found in the nucleus. In terms of biological role, 3' to 5' exoribonuclease required for proper 3' end maturation of MRP RNA and of the U5L snRNA. This chain is RNA exonuclease 3 (rex3), found in Schizosaccharomyces pombe (strain 972 / ATCC 24843) (Fission yeast).